The following is a 68-amino-acid chain: DNA-directed RNA polymerase subunit omega (68 aa).

This sequence belongs to the RNA polymerase subunit omega family. In terms of assembly, the RNAP catalytic core consists of 2 alpha, 1 beta, 1 beta' and 1 omega subunit. When a sigma factor is associated with the core the holoenzyme is formed, which can initiate transcription.

It catalyses the reaction RNA(n) + a ribonucleoside 5'-triphosphate = RNA(n+1) + diphosphate. Functionally, promotes RNA polymerase assembly. Latches the N- and C-terminal regions of the beta' subunit thereby facilitating its interaction with the beta and alpha subunits. This is DNA-directed RNA polymerase subunit omega from Trichlorobacter lovleyi (strain ATCC BAA-1151 / DSM 17278 / SZ) (Geobacter lovleyi).